A 327-amino-acid chain; its full sequence is Immunodominant envelope protein p35 (327 aa).

Residues 41 to 69 (KNGYDDYRDPPSPKPLPKSKQEPNADDKV) are disordered. Residues 59-69 (SKQEPNADDKV) show a composition bias toward basic and acidic residues. A helical membrane pass occupies residues 291-311 (ITMMFLIAIVIIIGLAIFDIN).

This sequence belongs to the poxviruses protein p35 family.

It is found in the virion membrane. Functionally, envelope protein that binds to the cell surface to provide virion attachment to target cell. This is Immunodominant envelope protein p35 from Fowlpox virus (strain NVSL) (FPV).